Consider the following 535-residue polypeptide: Berberine bridge enzyme-like 3 (535 aa).

The N-terminal stretch at 1-19 is a signal peptide; that stretch reads MKEALFGLYLVLLVSGLEA. A disulfide bond links Cys-32 and Cys-95. Asn-52 carries an N-linked (GlcNAc...) asparagine glycan. The FAD-binding PCMH-type domain maps to 73-247; the sequence is NNKNLLAIVV…LSWKINLVEV (175 aa). Positions 110–172 form a cross-link, 6-(S-cysteinyl)-8alpha-(pros-histidyl)-FAD (His-Cys); the sequence is HDNEGLSYVS…QTLAFPAGIC (63 aa). N-linked (GlcNAc...) asparagine glycans are attached at residues Asn-214, Asn-257, Asn-292, Asn-321, Asn-341, Asn-415, Asn-439, and Asn-444.

It belongs to the oxygen-dependent FAD-linked oxidoreductase family. Requires FAD as cofactor. Post-translationally, the FAD cofactor is bound via a bicovalent 6-S-cysteinyl, 8alpha-N1-histidyl FAD linkage.

It is found in the endoplasmic reticulum. Its subcellular location is the cell membrane. It localises to the secreted. The protein resides in the cell wall. In terms of biological role, flavin-dependent oxidoreductase involved in the biosynthetic pathway to 4-hydroxyindole-3-carbonyl nitrile (4-OH-ICN), a cyanogenic metabolite required for inducible pathogen defense. Converts indole cyanohydrin into indole-3-carbonyl nitrile (ICN). In Arabidopsis thaliana (Mouse-ear cress), this protein is Berberine bridge enzyme-like 3.